Here is a 187-residue protein sequence, read N- to C-terminus: Thermosensitive gluconokinase (187 aa).

10 to 17 (GVSGSGKT) serves as a coordination point for ATP.

This sequence belongs to the gluconokinase GntK/GntV family.

It catalyses the reaction D-gluconate + ATP = 6-phospho-D-gluconate + ADP + H(+). It participates in carbohydrate acid metabolism; L-idonate degradation. The protein is Thermosensitive gluconokinase (idnK) of Escherichia coli (strain K12).